The chain runs to 209 residues: Thymidine kinase (209 aa).

Residues 9 to 16 (AAMNAGKS) and 88 to 91 (DEAQ) contribute to the ATP site. Residue E89 is the Proton acceptor of the active site. Zn(2+) contacts are provided by C146, C148, C183, and H186.

Belongs to the thymidine kinase family. Homotetramer.

Its subcellular location is the cytoplasm. It carries out the reaction thymidine + ATP = dTMP + ADP + H(+). In Legionella pneumophila (strain Paris), this protein is Thymidine kinase.